A 444-amino-acid chain; its full sequence is 3-phosphoshikimate 1-carboxyvinyltransferase (444 aa).

3 residues coordinate 3-phosphoshikimate: lysine 29, serine 30, and arginine 34. Lysine 29 serves as a coordination point for phosphoenolpyruvate. 2 residues coordinate phosphoenolpyruvate: glycine 102 and arginine 131. Residues serine 176, glutamine 178, aspartate 326, and lysine 353 each coordinate 3-phosphoshikimate. Residue glutamine 178 coordinates phosphoenolpyruvate. The active-site Proton acceptor is aspartate 326. Phosphoenolpyruvate is bound by residues arginine 357 and arginine 399.

Belongs to the EPSP synthase family. As to quaternary structure, monomer.

The protein resides in the cytoplasm. The catalysed reaction is 3-phosphoshikimate + phosphoenolpyruvate = 5-O-(1-carboxyvinyl)-3-phosphoshikimate + phosphate. The protein operates within metabolic intermediate biosynthesis; chorismate biosynthesis; chorismate from D-erythrose 4-phosphate and phosphoenolpyruvate: step 6/7. Its function is as follows. Catalyzes the transfer of the enolpyruvyl moiety of phosphoenolpyruvate (PEP) to the 5-hydroxyl of shikimate-3-phosphate (S3P) to produce enolpyruvyl shikimate-3-phosphate and inorganic phosphate. In Synechococcus sp. (strain JA-3-3Ab) (Cyanobacteria bacterium Yellowstone A-Prime), this protein is 3-phosphoshikimate 1-carboxyvinyltransferase.